We begin with the raw amino-acid sequence, 134 residues long: Profilin-1 (134 aa).

The protein belongs to the profilin family. Occurs in many kinds of cells as a complex with monomeric actin in a 1:1 ratio.

The protein localises to the cytoplasm. Its subcellular location is the cytoskeleton. In terms of biological role, binds to actin and affects the structure of the cytoskeleton. At high concentrations, profilin prevents the polymerization of actin, whereas it enhances it at low concentrations. By binding to PIP2, it inhibits the formation of IP3 and DG. The chain is Profilin-1 (PRO1) from Nicotiana tabacum (Common tobacco).